A 216-amino-acid polypeptide reads, in one-letter code: Phosphoserine phosphatase (216 aa).

Asp10 serves as the catalytic Nucleophile. Residues Asp10 and Asp12 each coordinate Mg(2+). Asp12 serves as the catalytic Proton donor. Substrate-binding positions include Glu19, Arg55, 98–99 (SG), and Lys143. Asp166 is a binding site for Mg(2+). Asn169 serves as a coordination point for substrate.

This sequence belongs to the HAD-like hydrolase superfamily. SerB family. Requires Mg(2+) as cofactor.

It carries out the reaction O-phospho-L-serine + H2O = L-serine + phosphate. The enzyme catalyses O-phospho-D-serine + H2O = D-serine + phosphate. The protein operates within amino-acid biosynthesis; L-serine biosynthesis; L-serine from 3-phospho-D-glycerate: step 3/3. The sequence is that of Phosphoserine phosphatase from Lactococcus lactis subsp. lactis (strain IL1403) (Streptococcus lactis).